Consider the following 289-residue polypeptide: Phospholipase C (289 aa).

The N-terminal stretch at 1–25 (MKFKKVVLGMCLIASVLVFPVTIKA) is a signal peptide. A propeptide spanning residues 26–51 (NACCDEYLQTPAAPHDIDSKLPHKLS) is cleaved from the precursor. 9 residues coordinate Zn(2+): Trp-52, His-65, Asp-106, His-120, His-169, Asp-173, His-179, His-193, and Glu-197. Residues 52–289 (WSADNPTNTD…LEFWSKKTNE (238 aa)) enclose the Zn-dependent PLC domain.

Belongs to the bacterial zinc-metallophospholipase C family. As to quaternary structure, forms monomers, dimers and higher order oligomers, but only the monomer is enzymatically active. Zn(2+) serves as cofactor.

The protein resides in the secreted. It carries out the reaction a 1,2-diacyl-sn-glycero-3-phosphocholine + H2O = phosphocholine + a 1,2-diacyl-sn-glycerol + H(+). The enzyme catalyses 1,2-dihexadecanoyl-sn-glycero-3-phosphocholine + H2O = 1,2-dihexadecanoyl-sn-glycerol + phosphocholine + H(+). It catalyses the reaction 1-hexadecanoyl-2-(9Z-octadecenoyl)-sn-glycero-3-phosphocholine + H2O = 1-hexadecanoyl-2-(9Z-octadecenoyl)-sn-glycerol + phosphocholine + H(+). The catalysed reaction is 1,2-di-(9Z-octadecenoyl)-sn-glycero-3-phosphocholine + H2O = 1,2-di-(9Z-octadecenoyl)-sn-glycerol + phosphocholine + H(+). It carries out the reaction a 1,2-diacyl-sn-glycero-3-phosphoethanolamine + H2O = phosphoethanolamine + a 1,2-diacyl-sn-glycerol + H(+). The enzyme catalyses 1,2-di-(9Z-octadecenoyl)-sn-glycero-3-phosphoethanolamine + H2O = phosphoethanolamine + 1,2-di-(9Z-octadecenoyl)-sn-glycerol + H(+). It catalyses the reaction 1,2-dihexadecanoyl-sn-glycero-3-phosphoethanolamine + H2O = 1,2-dihexadecanoyl-sn-glycerol + phosphoethanolamine + H(+). The catalysed reaction is a 1,2-diacyl-sn-glycero-3-phospho-L-serine + H2O = O-phospho-L-serine + a 1,2-diacyl-sn-glycerol + H(+). It carries out the reaction a 1,2-diacyl-sn-glycero-3-phosphoglycerol + H2O = glycerol 1-phosphate + a 1,2-diacyl-sn-glycerol + H(+). The enzyme catalyses a 1,2-diacyl-sn-glycero-3-phospho-(1D-myo-inositol) + H2O = 1D-myo-inositol 1-phosphate + a 1,2-diacyl-sn-glycerol + H(+). It catalyses the reaction a sphingomyelin + H2O = phosphocholine + an N-acylsphing-4-enine + H(+). The catalysed reaction is a 1-O-(1Z-alkenyl)-2-acyl-sn-glycero-3-phosphoethanolamine + H2O = a 1-O-(1Z-alkenyl)-2-acyl-sn-glycerol + phosphoethanolamine + H(+). Its activity is regulated as follows. Enzymatic activity of LmPC-PLC can be specifically inhibited by its propeptide added in trans. The tendency of the enzyme to oligomerize, which appears to largely attenuate the enzymatic activity, may be one of the mechanisms regulating phospholipase activity in the host cell during the different steps of the infection cycle of L.monocytogenes. Enzyme activity is inhibited by EDTA and o-phenanthroline in vitro. Its function is as follows. Major virulence factor whose phospholipase activity facilitates pore formation by the pore-forming toxin listeriolysin O (LLO), leading to vacuolar membrane disruption and vacuolar escape of L.monocytogenes, which enables the bacterium to spread in the host. Acts as a phospholipase C exhibiting broad substrate specificity, with the highest activities towards diacylglycerophospholipids with phosphocholine, phosphoserine, and phosphoethanolamine head groups, but less towards phosphoglycerol or phosphoinositol head groups. Is also able to hydrolyze sphingomyelin and plasmenylethanolamine. The chain is Phospholipase C from Listeria monocytogenes serovar 1/2a (strain ATCC BAA-679 / EGD-e).